A 337-amino-acid polypeptide reads, in one-letter code: 25S rRNA (adenine(2142)-N(1))-methyltransferase (337 aa).

Positions 180 and 201 each coordinate S-adenosyl-L-methionine.

This sequence belongs to the BMT2 family.

The protein resides in the nucleus. The protein localises to the nucleolus. It catalyses the reaction adenosine(2142) in 25S rRNA + S-adenosyl-L-methionine = N(1)-methyladenosine(2142) in 25S rRNA + S-adenosyl-L-homocysteine + H(+). Its function is as follows. S-adenosyl-L-methionine-dependent methyltransferase that specifically methylates the N(1) position of adenine 2142 in 25S rRNA. N(1)-methyladenine(2142) in 25S rRNA is present in helix 65, a region that accounts for most of the intersubunit surface of the large subunit. This Saccharomyces cerevisiae (strain ATCC 204508 / S288c) (Baker's yeast) protein is 25S rRNA (adenine(2142)-N(1))-methyltransferase.